Reading from the N-terminus, the 264-residue chain is S-adenosylmethionine decarboxylase proenzyme (264 aa).

Catalysis depends on Ser113, which acts as the Schiff-base intermediate with substrate; via pyruvic acid. Residue Ser113 is modified to Pyruvic acid (Ser); by autocatalysis. Catalysis depends on His118, which acts as the Proton acceptor; for processing activity. Residue Cys141 is the Proton donor; for catalytic activity of the active site.

This sequence belongs to the prokaryotic AdoMetDC family. Type 2 subfamily. In terms of assembly, heterooctamer of four alpha and four beta chains arranged as a tetramer of alpha/beta heterodimers. The cofactor is pyruvate. Post-translationally, is synthesized initially as an inactive proenzyme. Formation of the active enzyme involves a self-maturation process in which the active site pyruvoyl group is generated from an internal serine residue via an autocatalytic post-translational modification. Two non-identical subunits are generated from the proenzyme in this reaction, and the pyruvate is formed at the N-terminus of the alpha chain, which is derived from the carboxyl end of the proenzyme. The post-translation cleavage follows an unusual pathway, termed non-hydrolytic serinolysis, in which the side chain hydroxyl group of the serine supplies its oxygen atom to form the C-terminus of the beta chain, while the remainder of the serine residue undergoes an oxidative deamination to produce ammonia and the pyruvoyl group blocking the N-terminus of the alpha chain.

It catalyses the reaction S-adenosyl-L-methionine + H(+) = S-adenosyl 3-(methylsulfanyl)propylamine + CO2. Its pathway is amine and polyamine biosynthesis; S-adenosylmethioninamine biosynthesis; S-adenosylmethioninamine from S-adenosyl-L-methionine: step 1/1. Its function is as follows. Catalyzes the decarboxylation of S-adenosylmethionine to S-adenosylmethioninamine (dcAdoMet), the propylamine donor required for the synthesis of the polyamines spermine and spermidine from the diamine putrescine. This Pseudomonas syringae pv. tomato (strain ATCC BAA-871 / DC3000) protein is S-adenosylmethionine decarboxylase proenzyme.